The sequence spans 227 residues: tRNA (guanine-N(1)-)-methyltransferase (227 aa).

S-adenosyl-L-methionine is bound by residues G111 and 135-140 (LGDYVL).

Belongs to the RNA methyltransferase TrmD family. As to quaternary structure, homodimer.

The protein localises to the cytoplasm. It catalyses the reaction guanosine(37) in tRNA + S-adenosyl-L-methionine = N(1)-methylguanosine(37) in tRNA + S-adenosyl-L-homocysteine + H(+). Specifically methylates guanosine-37 in various tRNAs. This chain is tRNA (guanine-N(1)-)-methyltransferase, found in Leifsonia xyli subsp. xyli (strain CTCB07).